Reading from the N-terminus, the 428-residue chain is BTB/POZ domain-containing protein KCTD16 (428 aa).

Residues 25 to 98 (EVVELNVGGQ…LRDRQVVLPD (74 aa)) enclose the BTB domain. The residue at position 112 (Tyr112) is a Phosphotyrosine. Ser130, Ser137, Ser143, and Ser146 each carry phosphoserine.

Homopentamer; forms an open pentamer. In contrast to other BTB domain-containing proteins, does not interact with CUL3. Interacts as a tetramer with GABRB1 and GABRB2.

Its subcellular location is the presynaptic cell membrane. It is found in the postsynaptic cell membrane. In terms of biological role, auxiliary subunit of GABA-B receptors that determine the pharmacology and kinetics of the receptor response. Increases agonist potency and markedly alter the G-protein signaling of the receptors by accelerating onset and promoting desensitization. This is BTB/POZ domain-containing protein KCTD16 (KCTD16) from Homo sapiens (Human).